The following is a 430-amino-acid chain: Enolase (430 aa).

Glutamine 163 is a binding site for (2R)-2-phosphoglycerate. The active-site Proton donor is glutamate 205. Mg(2+) is bound by residues aspartate 242, glutamate 288, and aspartate 315. Lysine 340, arginine 369, serine 370, and lysine 391 together coordinate (2R)-2-phosphoglycerate. Lysine 340 serves as the catalytic Proton acceptor.

Belongs to the enolase family. Mg(2+) is required as a cofactor.

It localises to the cytoplasm. The protein localises to the secreted. The protein resides in the cell surface. It catalyses the reaction (2R)-2-phosphoglycerate = phosphoenolpyruvate + H2O. It functions in the pathway carbohydrate degradation; glycolysis; pyruvate from D-glyceraldehyde 3-phosphate: step 4/5. Functionally, catalyzes the reversible conversion of 2-phosphoglycerate (2-PG) into phosphoenolpyruvate (PEP). It is essential for the degradation of carbohydrates via glycolysis. The chain is Enolase from Acidobacterium capsulatum (strain ATCC 51196 / DSM 11244 / BCRC 80197 / JCM 7670 / NBRC 15755 / NCIMB 13165 / 161).